A 271-amino-acid polypeptide reads, in one-letter code: Formamidopyrimidine-DNA glycosylase (271 aa).

The active-site Schiff-base intermediate with DNA is the proline 2. Catalysis depends on glutamate 3, which acts as the Proton donor. The active-site Proton donor; for beta-elimination activity is lysine 58. Residues histidine 91, arginine 110, and arginine 152 each coordinate DNA. The FPG-type zinc-finger motif lies at 237 to 271 (SIYGKKGRPCPKCGSAIRMMRLGGRSTFFCPLCQK). Arginine 261 (proton donor; for delta-elimination activity) is an active-site residue.

The protein belongs to the FPG family. As to quaternary structure, monomer. Requires Zn(2+) as cofactor.

The enzyme catalyses Hydrolysis of DNA containing ring-opened 7-methylguanine residues, releasing 2,6-diamino-4-hydroxy-5-(N-methyl)formamidopyrimidine.. It catalyses the reaction 2'-deoxyribonucleotide-(2'-deoxyribose 5'-phosphate)-2'-deoxyribonucleotide-DNA = a 3'-end 2'-deoxyribonucleotide-(2,3-dehydro-2,3-deoxyribose 5'-phosphate)-DNA + a 5'-end 5'-phospho-2'-deoxyribonucleoside-DNA + H(+). Involved in base excision repair of DNA damaged by oxidation or by mutagenic agents. Acts as a DNA glycosylase that recognizes and removes damaged bases. Has a preference for oxidized purines, such as 7,8-dihydro-8-oxoguanine (8-oxoG). Has AP (apurinic/apyrimidinic) lyase activity and introduces nicks in the DNA strand. Cleaves the DNA backbone by beta-delta elimination to generate a single-strand break at the site of the removed base with both 3'- and 5'-phosphates. In Geotalea daltonii (strain DSM 22248 / JCM 15807 / FRC-32) (Geobacter daltonii), this protein is Formamidopyrimidine-DNA glycosylase.